Here is a 793-residue protein sequence, read N- to C-terminus: DnaJ homolog subfamily C member 10 (793 aa).

Positions 1-32 (MGVWLSKDDYIRDLKRIILCFLIVYMAILVGT) are cleaved as a signal peptide. Residues 35-100 (DFYSLLGVSK…DLRKKYDKYG (66 aa)) enclose the J domain. The Thioredoxin 1 domain occupies 130–232 (EIITLERREF…ESLVSFAMQH (103 aa)). A disulfide bridge connects residues Cys-158 and Cys-161. 2 trxb regions span residues 235-350 (STVT…LPDF) and 348-463 (PDFE…PQNF). Thioredoxin domains follow at residues 454–553 (HVTT…IEDL), 557–662 (SVVS…SLRI), and 671–778 (VSTG…INEK). A disulfide bridge links Cys-480 with Cys-483. Asn-530 carries an N-linked (GlcNAc...) asparagine glycan. 2 cysteine pairs are disulfide-bonded: Cys-588–Cys-591 and Cys-700–Cys-703. The short motif at 790 to 793 (KDEL) is the Prevents secretion from ER element.

Interacts with HSPA5 (via its J domain). Interacts with EDEM1.

Its subcellular location is the endoplasmic reticulum lumen. Its function is as follows. Endoplasmic reticulum disulfide reductase involved both in the correct folding of proteins and degradation of misfolded proteins. Required for efficient folding of proteins in the endoplasmic reticulum by catalyzing the removal of non-native disulfide bonds formed during the folding of proteins, such as LDLR. Also involved in endoplasmic reticulum-associated degradation (ERAD) by reducing incorrect disulfide bonds in misfolded glycoproteins recognized by EDEM1. Interaction with HSPA5 is required its activity, not for the disulfide reductase activity, but to facilitate the release of DNAJC10 from its substrate. Promotes apoptotic signaling pathway in response to endoplasmic reticulum stress. The chain is DnaJ homolog subfamily C member 10 (DNAJC10) from Pongo abelii (Sumatran orangutan).